We begin with the raw amino-acid sequence, 451 residues long: uncharacterized protein (451 aa).

Residues 1-59 (MLHKNDIIETEISDISHEGMGIAKVDGFVFFVENALPGEIIKMRVLKLRKRIGYGKVEE) enclose the TRAM domain. Residues Q283, Y312, E333, and D381 each coordinate S-adenosyl-L-methionine. Catalysis depends on C408, which acts as the Nucleophile.

It belongs to the class I-like SAM-binding methyltransferase superfamily. RNA M5U methyltransferase family.

This is an uncharacterized protein from Streptococcus agalactiae serotype V (strain ATCC BAA-611 / 2603 V/R).